The following is a 149-amino-acid chain: 3-dehydroquinate dehydratase (149 aa).

The active-site Proton acceptor is Tyr-26. Substrate contacts are provided by Asn-75, His-81, and Asp-88. His-101 functions as the Proton donor in the catalytic mechanism. Residues 102-103 (LS) and Arg-112 contribute to the substrate site.

This sequence belongs to the type-II 3-dehydroquinase family. As to quaternary structure, homododecamer.

The enzyme catalyses 3-dehydroquinate = 3-dehydroshikimate + H2O. The protein operates within metabolic intermediate biosynthesis; chorismate biosynthesis; chorismate from D-erythrose 4-phosphate and phosphoenolpyruvate: step 3/7. Its function is as follows. Catalyzes a trans-dehydration via an enolate intermediate. The protein is 3-dehydroquinate dehydratase of Shewanella woodyi (strain ATCC 51908 / MS32).